The sequence spans 658 residues: Probable transketolase (658 aa).

H24 serves as a coordination point for substrate. Residues H64 and 113-115 contribute to the thiamine diphosphate site; that span reads GPL. Mg(2+) is bound at residue D154. Residues G155 and N184 each coordinate thiamine diphosphate. 2 residues coordinate Mg(2+): N184 and I186. Residues H259, R354, and S381 each coordinate substrate. H259 is a thiamine diphosphate binding site. The Proton donor role is filled by E408. F434 serves as a coordination point for thiamine diphosphate. Substrate-binding residues include H458, D466, and R517.

It belongs to the transketolase family. As to quaternary structure, homodimer. Mg(2+) is required as a cofactor. The cofactor is Ca(2+). Mn(2+) serves as cofactor. It depends on Co(2+) as a cofactor. Requires thiamine diphosphate as cofactor.

It carries out the reaction D-sedoheptulose 7-phosphate + D-glyceraldehyde 3-phosphate = aldehydo-D-ribose 5-phosphate + D-xylulose 5-phosphate. Necessary for high-efficiency recombination chromosomal DNA during genetic transformation. Functionally, catalyzes the transfer of a two-carbon ketol group from a ketose donor to an aldose acceptor, via a covalent intermediate with the cofactor thiamine pyrophosphate. The polypeptide is Probable transketolase (tkt) (Streptococcus pneumoniae serotype 4 (strain ATCC BAA-334 / TIGR4)).